A 1722-amino-acid polypeptide reads, in one-letter code: Lymphocyte antigen 75 (1722 aa).

An N-terminal signal peptide occupies residues Met1 to Pro27. Residues Ser28–Asp1666 are Extracellular-facing. Residues Asn33–Glu156 enclose the Ricin B-type lectin domain. A glycan (N-linked (GlcNAc...) asparagine) is linked at Asn135. A Fibronectin type-II domain is found at Ser164–Lys211. 4 cysteine pairs are disulfide-bonded: Cys169/Cys194, Cys183/Cys209, Cys247/Cys340, and Cys317/Cys332. Residues Gln225–Arg341 enclose the C-type lectin 1 domain. Asn345 and Asn377 each carry an N-linked (GlcNAc...) asparagine glycan. C-type lectin domains follow at residues Asn368–Lys486, Asn493–Lys625, Ala652–Arg778, and Ile818–Glu931. Disulfide bonds link Cys389/Cys485 and Cys462/Cys477. Asn529 carries N-linked (GlcNAc...) asparagine glycosylation. Cysteines 597 and 614 form a disulfide. 2 disulfides stabilise this stretch: Cys840–Cys930 and Cys904–Cys922. N-linked (GlcNAc...) asparagine glycans are attached at residues Asn843 and Asn865. Tyr933 carries the phosphotyrosine modification. Residues Asn934, Asn1076, and Asn1103 are each glycosylated (N-linked (GlcNAc...) asparagine). The C-type lectin 6 domain occupies Phe958 to Lys1091. Cys1060 and Cys1080 are oxidised to a cystine. In terms of domain architecture, C-type lectin 7 spans Tyr1110–Tyr1222. A disulfide bridge connects residues Cys1197 and Cys1211. Asn1225, Asn1320, and Asn1392 each carry an N-linked (GlcNAc...) asparagine glycan. In terms of domain architecture, C-type lectin 8 spans Phe1251–Gln1374. C-type lectin domains lie at Tyr1401–Lys1513 and Tyr1542–Val1661. A disulfide bond links Cys1488 and Cys1502. 2 N-linked (GlcNAc...) asparagine glycosylation sites follow: Asn1593 and Asn1626. An intrachain disulfide couples Cys1635 to Cys1650. The chain crosses the membrane as a helical span at residues Tyr1667–Phe1691. At Gln1692–Asp1722 the chain is on the cytoplasmic side. Ser1703 and Ser1719 each carry phosphoserine.

Post-translationally, N-glycosylated. Expressed in spleen, thymus, colon and peripheral blood lymphocytes. Detected in myeloid and B-lymphoid cell lines. Isoform 2 and isoform 3 are expressed in malignant Hodgkin lymphoma cells called Hodgkin and Reed-Sternberg (HRS) cells.

It is found in the membrane. Acts as an endocytic receptor to direct captured antigens from the extracellular space to a specialized antigen-processing compartment. Causes reduced proliferation of B-lymphocytes. The protein is Lymphocyte antigen 75 (LY75) of Homo sapiens (Human).